Consider the following 554-residue polypeptide: MTSEQPIPDITATPAWEALRKHHDQIGETHLRQIFADDPNRGHDLTVTVGDLYIDYSKHRITRDTISLLVDLARTANLEAHRDQMFAGAHINTSEDRAVLHTALRLPRDAELIVDGRNVVEDVHAVLDAMGDFTDRLRSGEWTGATGKRISTVVNIGIGGSDLGPVMVYQALRHYADAGISARFVSNVDPADLIATLADLDPATTLFIVASKTFSTLETLTNATAARRWLTDALGDAAVSQHFVAVSTNRRLVDDFGINTDNIFGFWDWVGGRYSVDSAIGLSVMAAIGREAFADFLSGFHIVDEHFRTAPPESNAPALLGLIGLWYSNFLGAQSRAVLPYSNDLARFAAYLQQLTMESNGKSTRADGTAVTTDTGEIYWGERGTNGQHAFYQLLHQGTRLVPADFIGFSQPIDDLPTVEGTGSMHDLLMSNFFAQTQVLAFGKTAEEIAAEGTPAAVVPHKVMPGNRPSTSILAKRLTPSVLGQLIAVYEHQVFTEGVVWGIDSFDQWGVELGKTQAKALLPVITSDGSPQRQSDSSTDALVRRYRTQRGRTG.

Glutamate 358 acts as the Proton donor in catalysis. Catalysis depends on residues histidine 389 and lysine 515. Residues 527–540 show a composition bias toward polar residues; that stretch reads SDGSPQRQSDSSTD. A disordered region spans residues 527-554; sequence SDGSPQRQSDSSTDALVRRYRTQRGRTG. Residues 544 to 554 show a composition bias toward basic residues; it reads RRYRTQRGRTG.

It belongs to the GPI family.

Its subcellular location is the cytoplasm. The catalysed reaction is alpha-D-glucose 6-phosphate = beta-D-fructose 6-phosphate. It participates in carbohydrate biosynthesis; gluconeogenesis. Its pathway is carbohydrate degradation; glycolysis; D-glyceraldehyde 3-phosphate and glycerone phosphate from D-glucose: step 2/4. Functionally, catalyzes the reversible isomerization of glucose-6-phosphate to fructose-6-phosphate. In Mycobacterium ulcerans (strain Agy99), this protein is Glucose-6-phosphate isomerase.